A 261-amino-acid chain; its full sequence is ATP synthase subunit a (261 aa).

A propeptide spans 1-14 (MSTLSFNNISTEVL) (removed in mature form). The next 7 membrane-spanning stretches (helical) occupy residues 38–58 (ITNI…INLL), 96–116 (IYFP…LIGM), 126–146 (HFVV…ILGF), 153–173 (FFSL…LVLI), 191–211 (ANIL…YNIM), 214–234 (GIIF…FSGL), and 235–255 (ELGI…GYIK).

Belongs to the ATPase A chain family. In terms of assembly, F-type ATPases have 2 components, CF(1) - the catalytic core - and CF(0) - the membrane proton channel. CF(1) has five subunits: alpha(3), beta(3), gamma(1), delta(1), epsilon(1). CF(0) has three main subunits: a, b and c.

The protein localises to the mitochondrion inner membrane. In terms of biological role, mitochondrial membrane ATP synthase (F(1)F(0) ATP synthase or Complex V) produces ATP from ADP in the presence of a proton gradient across the membrane which is generated by electron transport complexes of the respiratory chain. F-type ATPases consist of two structural domains, F(1) - containing the extramembraneous catalytic core and F(0) - containing the membrane proton channel, linked together by a central stalk and a peripheral stalk. During catalysis, ATP synthesis in the catalytic domain of F(1) is coupled via a rotary mechanism of the central stalk subunits to proton translocation. Key component of the proton channel; it may play a direct role in the translocation of protons across the membrane. The polypeptide is ATP synthase subunit a (atp-6) (Neurospora crassa (strain ATCC 24698 / 74-OR23-1A / CBS 708.71 / DSM 1257 / FGSC 987)).